The following is a 429-amino-acid chain: Argininosuccinate lyase (429 aa).

Belongs to the lyase 1 family. Argininosuccinate lyase subfamily.

It is found in the cytoplasm. It catalyses the reaction 2-(N(omega)-L-arginino)succinate = fumarate + L-arginine. Its pathway is amino-acid biosynthesis; L-arginine biosynthesis; L-arginine from L-ornithine and carbamoyl phosphate: step 3/3. This chain is Argininosuccinate lyase, found in Pyrobaculum aerophilum (strain ATCC 51768 / DSM 7523 / JCM 9630 / CIP 104966 / NBRC 100827 / IM2).